The following is a 450-amino-acid chain: Pancreatic triacylglycerol lipase (450 aa).

Disulfide bonds link C4–C10, C91–C102, and C91–C104. The active-site Nucleophile is the S153. N167 carries an N-linked (GlcNAc...) asparagine glycan. The Charge relay system role is filled by D177. Positions 188, 191, 193, and 196 each coordinate Ca(2+). A disulfide bridge connects residues C238 and C262. H264 (charge relay system) is an active-site residue. 3 disulfides stabilise this stretch: C286-C297, C300-C305, and C434-C450. A PLAT domain is found at W339–C450.

Belongs to the AB hydrolase superfamily. Lipase family. In terms of assembly, forms a 1:1 stoichiometric complex with (pro)colipase/CLPS.

The protein localises to the secreted. It carries out the reaction a triacylglycerol + H2O = a diacylglycerol + a fatty acid + H(+). The enzyme catalyses 1,2,3-tributanoylglycerol + H2O = dibutanoylglycerol + butanoate + H(+). It catalyses the reaction 1,2,3-tri-(9Z-octadecenoyl)-glycerol + H2O = di-(9Z)-octadecenoylglycerol + (9Z)-octadecenoate + H(+). The catalysed reaction is all-trans-retinyl hexadecanoate + H2O = all-trans-retinol + hexadecanoate + H(+). It carries out the reaction 1,2-di-(9Z-octadecenoyl)-glycerol + H2O = (9Z-octadecenoyl)-glycerol + (9Z)-octadecenoate + H(+). With respect to regulation, inhibited by bile salts, is reactivated by (pro)colipase/CLPS. Its function is as follows. Plays an important role in fat metabolism. It preferentially splits the esters of long-chain fatty acids at positions 1 and 3, producing mainly 2-monoacylglycerol and free fatty acids, and shows considerably higher activity against insoluble emulsified substrates than against soluble ones. The protein is Pancreatic triacylglycerol lipase (PNLIP) of Sus scrofa (Pig).